We begin with the raw amino-acid sequence, 203 residues long: ATP phosphoribosyltransferase (203 aa).

It belongs to the ATP phosphoribosyltransferase family. Short subfamily.

Its subcellular location is the cytoplasm. It carries out the reaction 1-(5-phospho-beta-D-ribosyl)-ATP + diphosphate = 5-phospho-alpha-D-ribose 1-diphosphate + ATP. It functions in the pathway amino-acid biosynthesis; L-histidine biosynthesis; L-histidine from 5-phospho-alpha-D-ribose 1-diphosphate: step 1/9. Catalyzes the condensation of ATP and 5-phosphoribose 1-diphosphate to form N'-(5'-phosphoribosyl)-ATP (PR-ATP). Has a crucial role in the pathway because the rate of histidine biosynthesis seems to be controlled primarily by regulation of HisG enzymatic activity. This Thermococcus kodakarensis (strain ATCC BAA-918 / JCM 12380 / KOD1) (Pyrococcus kodakaraensis (strain KOD1)) protein is ATP phosphoribosyltransferase.